The primary structure comprises 195 residues: HTH-type transcriptional regulator BetI (195 aa).

An HTH tetR-type domain is found at 8 to 68 (SIRRRQLIDA…ATMRDITSQL (61 aa)). A DNA-binding region (H-T-H motif) is located at residues 31 to 50 (TIAQIARRAGVSTGIISHYF).

Its pathway is amine and polyamine biosynthesis; betaine biosynthesis via choline pathway [regulation]. In terms of biological role, repressor involved in the biosynthesis of the osmoprotectant glycine betaine. It represses transcription of the choline transporter BetT and the genes of BetAB involved in the synthesis of glycine betaine. The chain is HTH-type transcriptional regulator BetI from Shigella flexneri serotype 5b (strain 8401).